A 157-amino-acid chain; its full sequence is Vitamin K-dependent protein C (157 aa).

Positions 1–157 (ENGEVDLDIQ…GCGRLHNYGV (157 aa)) constitute a Peptidase S1 domain. The N-linked (GlcNAc...) asparagine glycan is linked to asparagine 17. Residue aspartate 26 is the Charge relay system of the active site. Asparagine 78 carries an N-linked (GlcNAc...) asparagine glycan. 2 cysteine pairs are disulfide-bonded: cysteine 96–cysteine 110 and cysteine 121–cysteine 149. The active-site Charge relay system is the serine 125.

Belongs to the peptidase S1 family. Plasma; synthesized in the liver.

It localises to the secreted. It is found in the golgi apparatus. The protein localises to the endoplasmic reticulum. It catalyses the reaction Degradation of blood coagulation factors Va and VIIIa.. Protein C is a vitamin K-dependent serine protease that regulates blood coagulation by inactivating factors Va and VIIIa in the presence of calcium ions and phospholipids. Exerts a protective effect on the endothelial cell barrier function. The sequence is that of Vitamin K-dependent protein C (PROC) from Equus caballus (Horse).